Reading from the N-terminus, the 133-residue chain is Large ribosomal subunit protein eL19 (133 aa).

The segment at arginine 55–lysine 83 is disordered. Positions alanine 60 to lysine 83 are enriched in basic residues.

Belongs to the eukaryotic ribosomal protein eL19 family. As to quaternary structure, part of the 50S ribosomal subunit.

Its function is as follows. Binds to the 23S rRNA. This is Large ribosomal subunit protein eL19 from Korarchaeum cryptofilum (strain OPF8).